Here is a 290-residue protein sequence, read N- to C-terminus: PIH1 domain-containing protein 1 (290 aa).

3 positions are modified to phosphoserine: S12, S16, and S173.

It belongs to the PIH1 family. As to quaternary structure, component of the R2TP complex composed at least of RUVBL1, RUVBL2, RPAP3 and PIHD1. Component of the PAQosome complex which is responsible for the biogenesis of several protein complexes and which consists of R2TP complex members RUVBL1, RUVBL2, RPAP3 and PIH1D1, URI complex members PFDN2, PFDN6, PDRG1, UXT and URI1 as well as ASDURF, POLR2E and DNAAF10/WDR92. Interacts with phosphorylated TELO2 and mediates interaction of TELO2 with the R2TP complex. Interacts with phosphorylated ECD, EFTUD2/SNRP116, RPB1 and UBR5 and with RPB1 in a phosphorylation-independent manner. Interacts with the core C/D box snoRNP particle components NOP58 and FBL and with RUVBL1/TIP49. Interacts with RPAP3 and DNAAF10. Interacts with histone H4 and with SWI/SNF complex member SMARCB1/SNF5. Interacts with the mTORC1 complex member RPTOR. Interacts with MSL1.

It is found in the nucleus. Involved in the assembly of C/D box small nucleolar ribonucleoprotein (snoRNP) particles. Recruits the SWI/SNF complex to the core promoter of rRNA genes and enhances pre-rRNA transcription. Mediates interaction of TELO2 with the R2TP complex which is necessary for the stability of MTOR and SMG1. Positively regulates the assembly and activity of the mTORC1 complex. This is PIH1 domain-containing protein 1 (Pih1d1) from Rattus norvegicus (Rat).